Reading from the N-terminus, the 159-residue chain is Keratin-associated protein 9-3 (159 aa).

A run of 16 repeats spans residues 8–12 (CCQPT), 13–17 (CCRTT), 32–36 (CCQPS), 37–41 (CCVSS), 46–50 (CCHPT), 51–55 (CCQNT), 56–60 (CCRTT), 61–65 (CCQPI), 70–74 (CCQPS), 75–79 (CCSTP), 80–84 (CCQPT), 85–89 (CCGSS), 129–133 (CCRPA), 134–138 (CCETT), 139–143 (CCRTT), and 153–157 (CCQPS). Positions 8 to 157 (CCQPTCCRTT…TCVYSCCQPS (150 aa)) are 16 X 5 AA repeats of C-C-[RQVSHE]-[SPTN]-[TASPI].

The protein belongs to the KRTAP type 9 family. As to quaternary structure, interacts with hair keratins.

Its function is as follows. In the hair cortex, hair keratin intermediate filaments are embedded in an interfilamentous matrix, consisting of hair keratin-associated proteins (KRTAP), which are essential for the formation of a rigid and resistant hair shaft through their extensive disulfide bond cross-linking with abundant cysteine residues of hair keratins. The matrix proteins include the high-sulfur and high-glycine-tyrosine keratins. The protein is Keratin-associated protein 9-3 (KRTAP9-3) of Homo sapiens (Human).